Consider the following 267-residue polypeptide: Undecaprenyl-diphosphatase (267 aa).

8 consecutive transmembrane segments (helical) span residues 5–25, 45–65, 82–102, 108–128, 143–163, 183–203, 213–233, and 243–263; these read TIVA…PVSS, FEVL…AGRL, ILAV…AHRI, FETP…LLFV, FPLP…IPGV, AAEF…VYDL, AATG…VVVV, and YGYG…LLAL.

This sequence belongs to the UppP family.

The protein resides in the cell inner membrane. It catalyses the reaction di-trans,octa-cis-undecaprenyl diphosphate + H2O = di-trans,octa-cis-undecaprenyl phosphate + phosphate + H(+). Its function is as follows. Catalyzes the dephosphorylation of undecaprenyl diphosphate (UPP). Confers resistance to bacitracin. This is Undecaprenyl-diphosphatase from Paracoccus denitrificans (strain Pd 1222).